A 161-amino-acid chain; its full sequence is Large ribosomal subunit protein uL15 (161 aa).

Positions 1 to 13 (MKLNELRDNEGAA) are enriched in basic and acidic residues. Positions 1–51 (MKLNELRDNEGAARKKKRVARGPGSGKGKTAGRGIKGQKSRSGVALNGYEG) are disordered. Residues 23-35 (PGSGKGKTAGRGI) are compositionally biased toward gly residues.

Belongs to the universal ribosomal protein uL15 family. In terms of assembly, part of the 50S ribosomal subunit.

Its function is as follows. Binds to the 23S rRNA. The polypeptide is Large ribosomal subunit protein uL15 (Cereibacter sphaeroides (strain ATCC 17023 / DSM 158 / JCM 6121 / CCUG 31486 / LMG 2827 / NBRC 12203 / NCIMB 8253 / ATH 2.4.1.) (Rhodobacter sphaeroides)).